Here is a 101-residue protein sequence, read N- to C-terminus: MANITVTFTITEFCLHTGVTEEELNEIVGLGVIEPYEDDNTDWQFDDRAASVVQRALRLREELALDWPGIAVALTLLEENSRLREENRLLLQRLSRFISHP.

The protein belongs to the CbpM family.

Functionally, interacts with CbpA and inhibits both the DnaJ-like co-chaperone activity and the DNA binding activity of CbpA. Together with CbpA, modulates the activity of the DnaK chaperone system. Does not inhibit the co-chaperone activity of DnaJ. The protein is Chaperone modulatory protein CbpM of Salmonella paratyphi A (strain ATCC 9150 / SARB42).